Reading from the N-terminus, the 492-residue chain is Ketol-acid reductoisomerase (NADP(+)) (492 aa).

The KARI N-terminal Rossmann domain occupies 14–208; it reads LDQLGRCRFM…GGHKAGVLES (195 aa). Residues 45–48, R68, R76, S78, and 108–110 each bind NADP(+); these read CGAQ and DKQ. H132 is an active-site residue. Position 158 (G158) interacts with NADP(+). 2 consecutive KARI C-terminal knotted domains span residues 209–344 and 345–485; these read SFVA…NAPK and YDGK…MTDM. Residues D217, E221, E389, and E393 each coordinate Mg(2+). S414 is a substrate binding site.

This sequence belongs to the ketol-acid reductoisomerase family. Requires Mg(2+) as cofactor.

It catalyses the reaction (2R)-2,3-dihydroxy-3-methylbutanoate + NADP(+) = (2S)-2-acetolactate + NADPH + H(+). The catalysed reaction is (2R,3R)-2,3-dihydroxy-3-methylpentanoate + NADP(+) = (S)-2-ethyl-2-hydroxy-3-oxobutanoate + NADPH + H(+). It functions in the pathway amino-acid biosynthesis; L-isoleucine biosynthesis; L-isoleucine from 2-oxobutanoate: step 2/4. It participates in amino-acid biosynthesis; L-valine biosynthesis; L-valine from pyruvate: step 2/4. Functionally, involved in the biosynthesis of branched-chain amino acids (BCAA). Catalyzes an alkyl-migration followed by a ketol-acid reduction of (S)-2-acetolactate (S2AL) to yield (R)-2,3-dihydroxy-isovalerate. In the isomerase reaction, S2AL is rearranged via a Mg-dependent methyl migration to produce 3-hydroxy-3-methyl-2-ketobutyrate (HMKB). In the reductase reaction, this 2-ketoacid undergoes a metal-dependent reduction by NADPH to yield (R)-2,3-dihydroxy-isovalerate. This Haemophilus influenzae (strain PittEE) protein is Ketol-acid reductoisomerase (NADP(+)).